The primary structure comprises 329 residues: o-succinylbenzoate synthase (329 aa).

Residue K140 is the Proton donor of the active site. Mg(2+)-binding residues include D168, E197, and D220. Residue K242 is the Proton acceptor of the active site.

Belongs to the mandelate racemase/muconate lactonizing enzyme family. MenC type 1 subfamily. It depends on a divalent metal cation as a cofactor.

The enzyme catalyses (1R,6R)-6-hydroxy-2-succinyl-cyclohexa-2,4-diene-1-carboxylate = 2-succinylbenzoate + H2O. It functions in the pathway quinol/quinone metabolism; 1,4-dihydroxy-2-naphthoate biosynthesis; 1,4-dihydroxy-2-naphthoate from chorismate: step 4/7. The protein operates within quinol/quinone metabolism; menaquinone biosynthesis. Converts 2-succinyl-6-hydroxy-2,4-cyclohexadiene-1-carboxylate (SHCHC) to 2-succinylbenzoate (OSB). The sequence is that of o-succinylbenzoate synthase from Haemophilus influenzae (strain ATCC 51907 / DSM 11121 / KW20 / Rd).